Consider the following 458-residue polypeptide: Alpha-glucosides-binding periplasmic protein AglE (458 aa).

A signal peptide spans 1 to 27 (MKRSLLIGVAAFALLAGTAGLAGTAGA).

Belongs to the bacterial solute-binding protein 1 family.

The protein localises to the periplasm. In terms of biological role, part of the binding-protein-dependent transport system for alpha-glucosides such as sucrose, maltose and trehalose. The sequence is that of Alpha-glucosides-binding periplasmic protein AglE (aglE) from Rhizobium meliloti (strain 1021) (Ensifer meliloti).